The sequence spans 200 residues: Dephospho-CoA kinase (200 aa).

The 197-residue stretch at 4–200 folds into the DPCK domain; the sequence is TIGLTGSVAT…TFIKRFVKNK (197 aa). 12 to 17 contacts ATP; it reads ATGKST.

It belongs to the CoaE family.

It localises to the cytoplasm. It catalyses the reaction 3'-dephospho-CoA + ATP = ADP + CoA + H(+). Its pathway is cofactor biosynthesis; coenzyme A biosynthesis; CoA from (R)-pantothenate: step 5/5. Its function is as follows. Catalyzes the phosphorylation of the 3'-hydroxyl group of dephosphocoenzyme A to form coenzyme A. This chain is Dephospho-CoA kinase, found in Listeria monocytogenes serotype 4b (strain F2365).